Consider the following 211-residue polypeptide: ATP phosphoribosyltransferase (211 aa).

It belongs to the ATP phosphoribosyltransferase family. Short subfamily. In terms of assembly, heteromultimer composed of HisG and HisZ subunits.

It is found in the cytoplasm. It carries out the reaction 1-(5-phospho-beta-D-ribosyl)-ATP + diphosphate = 5-phospho-alpha-D-ribose 1-diphosphate + ATP. It participates in amino-acid biosynthesis; L-histidine biosynthesis; L-histidine from 5-phospho-alpha-D-ribose 1-diphosphate: step 1/9. In terms of biological role, catalyzes the condensation of ATP and 5-phosphoribose 1-diphosphate to form N'-(5'-phosphoribosyl)-ATP (PR-ATP). Has a crucial role in the pathway because the rate of histidine biosynthesis seems to be controlled primarily by regulation of HisG enzymatic activity. This Pseudomonas putida (strain W619) protein is ATP phosphoribosyltransferase.